Consider the following 396-residue polypeptide: Activity-regulated cytoskeleton-associated protein (396 aa).

The stretch at Ser54–Tyr78 forms a coiled coil. The interaction with SH3GL1 or SH3GL3 stretch occupies residues Lys89–Glu100. A disordered region spans residues Pro177–Pro207. The tract at residues Gln195 to Phe214 is interaction with DNM2. Position 260 is a phosphoserine; by CaMK2 (Ser260). Residues Lys268 and Lys269 each participate in a glycyl lysine isopeptide (Lys-Gly) (interchain with G-Cter in ubiquitin) cross-link. Thr278 is subject to Phosphothreonine. The tract at residues Gln356–Glu396 is disordered. Polar residues predominate over residues Ala382–Glu396.

The protein belongs to the ARC/ARG3.1 family. Homooligomer; homooligomerizes into virion-like capsids. Interacts with SH3GL1/endophilin-2, SH3GL3/endophilin-3 and DNM2/DYN2. Interacts with CAMK2B (in the kinase inactive state); leading to target ARC to inactive synapses. Interacts with PSEN1. Interacts with GRIN2A and GRIN2B; inhibiting homooligomerization. In terms of processing, ubiquitinated by UBE3A, leading to its degradation by the proteasome, thereby promoting AMPA receptors (AMPARs) expression at synapses. Ubiquitinated by RNF216 at Lys-268 and Lys-269 limiting ARC protein levels induced by synaptic activity and thus regulating ARC-dependent forms of synaptic plasticity. Palmitoylation anchors the protein into the membrane by allowing direct insertion into the hydrophobic core of the lipid bilayer. Post-translationally, phosphorylation at Ser-260 by CaMK2 prevents homooligomerization into virion-like capsids by disrupting an interaction surface essential for high-order oligomerization. Phosphorylation by CaMK2 inhibits synaptic activity. Expressed in brain and testis. In primary visual cortex, detected in all cortical layers with the exception of layer 5: present at highest level in layers 2/3 and 4, the predominant sites of ocular dominance plasticity (at protein level). Also expressed in skin-migratory dendritic cells.

The protein resides in the extracellular vesicle membrane. It localises to the postsynaptic cell membrane. Its subcellular location is the synapse. The protein localises to the postsynaptic density. It is found in the early endosome membrane. The protein resides in the cell projection. It localises to the dendrite. Its subcellular location is the cytoplasm. The protein localises to the cytoskeleton. It is found in the cell cortex. The protein resides in the dendritic spine. It localises to the cytoplasmic vesicle. Its subcellular location is the secretory vesicle. The protein localises to the acrosome. It is found in the clathrin-coated vesicle membrane. In terms of biological role, master regulator of synaptic plasticity that self-assembles into virion-like capsids that encapsulate RNAs and mediate intercellular RNA transfer in the nervous system. ARC protein is released from neurons in extracellular vesicles that mediate the transfer of ARC mRNA into new target cells, where ARC mRNA can undergo activity-dependent translation. ARC capsids are endocytosed and are able to transfer ARC mRNA into the cytoplasm of neurons. Acts as a key regulator of synaptic plasticity: required for protein synthesis-dependent forms of long-term potentiation (LTP) and depression (LTD) and for the formation of long-term memory. Regulates synaptic plasticity by promoting endocytosis of AMPA receptors (AMPARs) in response to synaptic activity: this endocytic pathway maintains levels of surface AMPARs in response to chronic changes in neuronal activity through synaptic scaling, thereby contributing to neuronal homeostasis. Acts as a postsynaptic mediator of activity-dependent synapse elimination in the developing cerebellum by mediating elimination of surplus climbing fiber synapses. Accumulates at weaker synapses, probably to prevent their undesired enhancement. This suggests that ARC-containing virion-like capsids may be required to eliminate synaptic material. Required to transduce experience into long-lasting changes in visual cortex plasticity and for long-term memory. Involved in postsynaptic trafficking and processing of amyloid-beta A4 (APP) via interaction with PSEN1. In addition to its role in synapses, also involved in the regulation of the immune system: specifically expressed in skin-migratory dendritic cells and regulates fast dendritic cell migration, thereby regulating T-cell activation. This Mus musculus (Mouse) protein is Activity-regulated cytoskeleton-associated protein.